A 65-amino-acid chain; its full sequence is Hainantoxin-X.3 (65 aa).

Positions 1–20 (MNMKILVLVAVLCLVVSTHA) are cleaved as a signal peptide. Residues 21–37 (ERHSKTDMGDSPMIQER) constitute a propeptide that is removed on maturation. 3 cysteine pairs are disulfide-bonded: cysteine 39-cysteine 56, cysteine 46-cysteine 59, and cysteine 55-cysteine 64.

This sequence belongs to the neurotoxin 36 family. 02 subfamily. As to expression, expressed by the venom gland.

The protein resides in the secreted. In terms of biological role, reversibly blocks N-type calcium channels (Cav2.2/CACNA1B) in rat dorsal root ganglion cells. Elicits no toxic symptoms in either vertebrates or invertebrates during a period of 48 hours post-injection, when it was assayed in vivo by direct injection into mice and cockroaches. This is Hainantoxin-X.3 from Cyriopagopus hainanus (Chinese bird spider).